Here is a 192-residue protein sequence, read N- to C-terminus: 3-hydroxyanthranilate 3,4-dioxygenase (192 aa).

Residue Arg50 coordinates O2. 3 residues coordinate Fe cation: His54, Glu60, and His102. Glu60 is a binding site for substrate. Residues Arg106 and Glu116 each coordinate substrate. The a divalent metal cation site is built by Cys131, Cys134, Cys168, and Cys171.

It belongs to the 3-HAO family. Fe(2+) serves as cofactor.

It is found in the cytoplasm. The catalysed reaction is 3-hydroxyanthranilate + O2 = (2Z,4Z)-2-amino-3-carboxymuconate 6-semialdehyde. The protein operates within cofactor biosynthesis; NAD(+) biosynthesis; quinolinate from L-kynurenine: step 3/3. Catalyzes the oxidative ring opening of 3-hydroxyanthranilate to 2-amino-3-carboxymuconate semialdehyde, which spontaneously cyclizes to quinolinate. This is 3-hydroxyanthranilate 3,4-dioxygenase from Coccidioides immitis (strain RS) (Valley fever fungus).